A 545-amino-acid chain; its full sequence is E3 ubiquitin-protein ligase ipaH9.8 (545 aa).

Residues Met1–Met242 are interaction with target proteins. LRR repeat units lie at residues Asn57–Ala77, Gln78–Leu99, Lys100–Pro117, Ala118–Leu139, Leu140–Gln157, Ala158–Asn179, Val182–Leu203, and Asn205–Thr228. Residues Ser243–Leu250 are linker. Positions His251 to Ser545 are E3 ubiquitin-protein ligase catalytic domain. The 293-residue stretch at Pro253–Ser545 folds into the NEL domain. The Glycyl thioester intermediate role is filled by Cys337.

This sequence belongs to the LRR-containing bacterial E3 ligase family. In terms of assembly, also interacts with human and mouse U2AF1 (U2AF35). In terms of processing, ubiquitinated in the presence of host E1 ubiquitin-activating enzyme, E2 ubiquitin-conjugating enzyme and ubiquitin.

It localises to the secreted. The protein resides in the host cytoplasm. Its subcellular location is the host nucleus. The catalysed reaction is S-ubiquitinyl-[E2 ubiquitin-conjugating enzyme]-L-cysteine + [acceptor protein]-L-lysine = [E2 ubiquitin-conjugating enzyme]-L-cysteine + N(6)-ubiquitinyl-[acceptor protein]-L-lysine.. Exists in an autoinhibited state in the absence of substrate protein, due to interactions of the leucine-rich repeats with NEL domain. Is activated upon binding to a substrate protein. Its function is as follows. Effector E3 ubiquitin ligase that interferes with host's ubiquitination pathway and modulates the acute inflammatory responses, thus facilitating bacterial colonization within the host cell. Interacts with IKBKG (NEMO) and TNIP1 (ABIN-1), a ubiquitin-binding adapter protein, which results in TNIP1-dependent 'Lys-27'-linked polyubiquitination of IKBKG. Consequently, polyubiquitinated IKBKG undergoes proteasome-dependent degradation, which perturbs NF-kappa-B activation during bacterial infection. Mediates polyubiquitination of host U2AF1, leading to its proteasomal degradation. Catalyzes 'Lys-48'-linked polyubiquitination and subsequent degradation of a subset of host guanylate-binding proteins (GBP1, GBP2, GBP4 and GBP6), thereby suppressing host cell defense. In contrast, host GBP3 and GBP7 are not ubiquitinated by IpaH9.8. Uses UBE2D2 (UBCH5B) as an E2 ubiquitin-conjugating enzyme. This chain is E3 ubiquitin-protein ligase ipaH9.8 (ipaH9.8), found in Shigella flexneri serotype X (strain 2002017).